The chain runs to 349 residues: N-lysine methyltransferase KMT5A (349 aa).

Positions 18–46 (AAVAATAPGPEMVEQRGPGRPRSDGENVF) are disordered. Serine 57 carries the post-translational modification Phosphoserine. The segment at 65 to 207 (RSPLQEENSV…SEERKKNELI (143 aa)) is disordered. Over residues 107 to 119 (VKSDEQKSKDTRR) the composition is skewed to basic and acidic residues. A Phosphothreonine modification is found at threonine 138. The segment covering 154 to 170 (ALKKSLKGKQAPRKKSQ) has biased composition (basic residues). Residues 192-207 (SKAELQSEERKKNELI) show a composition bias toward basic and acidic residues. The region spanning 213–334 (EGMKIDLIDG…AGEELLYDYG (122 aa)) is the SET domain. Residues 223–225 (KGR), tyrosine 268, and 295–296 (NH) each bind S-adenosyl-L-methionine.

This sequence belongs to the class V-like SAM-binding methyltransferase superfamily. Histone-lysine methyltransferase family. PR/SET subfamily. Interacts with L3MBTL1. Interacts with SIRT2 (phosphorylated form); the interaction is direct, stimulates KMT5A-mediated methyltransferase activity at histone H4 'Lys-20' (H4K20me1) and is increased in a H(2)O(2)-induced oxidative stress-dependent manner. Post-translationally, ubiquitinated and degraded by the DCX(DTL) complex.

It is found in the nucleus. It localises to the chromosome. The catalysed reaction is L-lysyl(20)-[histone H4] + S-adenosyl-L-methionine = N(6)-methyl-L-lysyl(20)-[histone H4] + S-adenosyl-L-homocysteine + H(+). It catalyses the reaction L-lysyl-[protein] + S-adenosyl-L-methionine = N(6)-methyl-L-lysyl-[protein] + S-adenosyl-L-homocysteine + H(+). Its function is as follows. Protein-lysine N-methyltransferase that monomethylates both histones and non-histone proteins. Specifically monomethylates 'Lys-20' of histone H4 (H4K20me1). H4K20me1 is enriched during mitosis and represents a specific tag for epigenetic transcriptional repression. Mainly functions in euchromatin regions, thereby playing a central role in the silencing of euchromatic genes. Required for cell proliferation, probably by contributing to the maintenance of proper higher-order structure of DNA during mitosis. Involved in chromosome condensation and proper cytokinesis. Nucleosomes are preferred as substrate compared to free histones. Mediates monomethylation of p53/TP53 at 'Lys-382', leading to repress p53/TP53-target genes. Plays a negative role in TGF-beta response regulation and a positive role in cell migration. This Mus musculus (Mouse) protein is N-lysine methyltransferase KMT5A.